A 663-amino-acid chain; its full sequence is UvrABC system protein B (663 aa).

The segment covering 1-10 (MIDKRDDKPF) has biased composition (basic and acidic residues). The tract at residues 1 to 23 (MIDKRDDKPFKLKSKYKPSGDQP) is disordered. Positions 31 to 418 (DNIEGGEKAQ…TNTIIEQIIR (388 aa)) constitute a Helicase ATP-binding domain. Residue 44-51 (GATGTGKT) participates in ATP binding. A Beta-hairpin motif is present at residues 97-120 (YYDYYQPEAYVPSSDTYIEKDSSV). A Helicase C-terminal domain is found at 435–597 (QMDDLLGEIN…IVPQTIKKDI (163 aa)). The UVR domain maps to 627–662 (KEAINALQKQMQEAAELLDFELAAQMRDLILELKLM).

Belongs to the UvrB family. As to quaternary structure, forms a heterotetramer with UvrA during the search for lesions. Interacts with UvrC in an incision complex.

It localises to the cytoplasm. The UvrABC repair system catalyzes the recognition and processing of DNA lesions. A damage recognition complex composed of 2 UvrA and 2 UvrB subunits scans DNA for abnormalities. Upon binding of the UvrA(2)B(2) complex to a putative damaged site, the DNA wraps around one UvrB monomer. DNA wrap is dependent on ATP binding by UvrB and probably causes local melting of the DNA helix, facilitating insertion of UvrB beta-hairpin between the DNA strands. Then UvrB probes one DNA strand for the presence of a lesion. If a lesion is found the UvrA subunits dissociate and the UvrB-DNA preincision complex is formed. This complex is subsequently bound by UvrC and the second UvrB is released. If no lesion is found, the DNA wraps around the other UvrB subunit that will check the other stand for damage. The sequence is that of UvrABC system protein B from Streptococcus pyogenes serotype M18 (strain MGAS8232).